Here is a 144-residue protein sequence, read N- to C-terminus: Snaclec 6 (144 aa).

An N-terminal signal peptide occupies residues 1 to 23; it reads MGRFISVSFGLLVVFLSLSGTGA. Disulfide bonds link cysteine 25/cysteine 36, cysteine 53/cysteine 142, and cysteine 119/cysteine 134. In terms of domain architecture, C-type lectin spans 32–143; the sequence is HEGHCYKVFK…CNFIAPVVCK (112 aa).

It belongs to the snaclec family. Heterodimer; disulfide-linked.

The protein localises to the secreted. Its function is as follows. Interferes with one step of hemostasis (modulation of platelet aggregation, or coagulation cascade, for example). In Daboia siamensis (Eastern Russel's viper), this protein is Snaclec 6.